The sequence spans 230 residues: Calcyclin-binding protein (230 aa).

The tract at residues 1-82 (MSSALEELQK…YTVKISNYGW (82 aa)) is interaction with SIAH1. The residue at position 3 (serine 3) is a Phosphoserine. N6-acetyllysine occurs at positions 10 and 21. Serine 36 is subject to Phosphoserine. The tract at residues 38–59 (IETEMKNKMQQKSQRKAELTEN) is disordered. The CS domain occupies 75 to 169 (VKISNYGWDQ…AENTRWDYLT (95 aa)). An interaction with SKP1 region spans residues 75 to 230 (VKISNYGWDQ…EKQAKGDTDF (156 aa)). N6-acetyllysine is present on residues lysine 87 and lysine 120. The segment at 156–230 (CRKKAENTRW…EKQAKGDTDF (75 aa)) is interaction with S100A6. An SGS domain is found at 170–230 (QVEKECKEKE…EKQAKGDTDF (61 aa)).

Monomer or homodimer. Component of some large E3 complex at least composed of UBE2D1, SIAH1, CACYBP/SIP, SKP1, APC and TBL1X. Interacts directly with SIAH1, SIAH2 and SKP1. Interacts with proteins of the S100 family S100A1, S100A6, S100B, S100P and S100A12 in a calcium-dependent manner. Post-translationally, phosphorylated on serine residues. Phosphorylated upon induction by RA or at high calcium concentrations.

It is found in the nucleus. Its subcellular location is the cytoplasm. In terms of biological role, may be involved in calcium-dependent ubiquitination and subsequent proteasomal degradation of target proteins. Probably serves as a molecular bridge in ubiquitin E3 complexes. Participates in the ubiquitin-mediated degradation of beta-catenin (CTNNB1). The protein is Calcyclin-binding protein (CACYBP) of Bos taurus (Bovine).